A 254-amino-acid chain; its full sequence is Metallo-beta-lactamase type 2 (254 aa).

An N-terminal signal peptide occupies residues 1–27 (MMKGWMKCGLAGAVVLMASFWGGSVRA). Asp-99 is a binding site for Zn(2+). Residues Thr-135 and His-174 each coordinate substrate. Residue Cys-193 participates in Zn(2+) binding. Residues Lys-196 and Asn-201 each coordinate substrate. Zn(2+) is bound at residue His-231.

The protein belongs to the metallo-beta-lactamase superfamily. Class-B beta-lactamase family. Monomer. Requires Zn(2+) as cofactor.

The protein localises to the periplasm. The catalysed reaction is a beta-lactam + H2O = a substituted beta-amino acid. Competitively inhibited by mercaptophosphonate and pyridine carboxylate derivatives. Also inhibited by the binding of a second zinc ion and by chelating agents such as EDTA. Confers resistance to the different beta-lactams antibiotics (penicillin, cephalosporin and carbapenem) via the hydrolysis of the beta-lactam ring. It is able to hydrolyze penicillin and imipenem, but is much less active against cephalothin, cefotaxime, meropenem and ceftazidime. In Aeromonas hydrophila, this protein is Metallo-beta-lactamase type 2.